The sequence spans 495 residues: Membrane-bound lytic murein transglycosylase F (495 aa).

Positions 1 to 29 (MEIRKLSLSTIRSIITSLSVLVLVISASA) are cleaved as a signal peptide. Residues 30-273 (TLVRSTPPNV…VTKHFFERHI (244 aa)) form a non-LT domain region. Residues 274 to 495 (DEVTTGEAMV…TAAQGENLSL (222 aa)) are LT domain. The active site involves E320.

This sequence in the N-terminal section; belongs to the bacterial solute-binding protein 3 family. It in the C-terminal section; belongs to the transglycosylase Slt family.

It is found in the cell outer membrane. The enzyme catalyses Exolytic cleavage of the (1-&gt;4)-beta-glycosidic linkage between N-acetylmuramic acid (MurNAc) and N-acetylglucosamine (GlcNAc) residues in peptidoglycan, from either the reducing or the non-reducing ends of the peptidoglycan chains, with concomitant formation of a 1,6-anhydrobond in the MurNAc residue.. Murein-degrading enzyme that degrades murein glycan strands and insoluble, high-molecular weight murein sacculi, with the concomitant formation of a 1,6-anhydromuramoyl product. Lytic transglycosylases (LTs) play an integral role in the metabolism of the peptidoglycan (PG) sacculus. Their lytic action creates space within the PG sacculus to allow for its expansion as well as for the insertion of various structures such as secretion systems and flagella. The sequence is that of Membrane-bound lytic murein transglycosylase F from Cellvibrio japonicus (strain Ueda107) (Pseudomonas fluorescens subsp. cellulosa).